Consider the following 146-residue polypeptide: Heat-stable 19 kDa antigen (146 aa).

A signal peptide spans 1 to 20 (MKFSLLSAIAAAVFVPFTSA).

This sequence belongs to the cerato-platanin family. Glycosylated.

The protein resides in the secreted. This Coccidioides posadasii (strain C735) (Valley fever fungus) protein is Heat-stable 19 kDa antigen (CSA).